The primary structure comprises 297 residues: Formiminotransferase cyclodeaminase-like protein (297 aa).

Positions Leu2–Trp196 are formiminotransferase N-subdomain. Catalysis depends on His89, which acts as the For formimidoyltransferase activity. Gly178–Gly187 is a binding site for folate.

It belongs to the formiminotransferase family. Expressed constitutively in roots, stems, leaves and flowers.

The protein localises to the golgi apparatus. It localises to the trans-Golgi network. It carries out the reaction (6S)-5-formyl-5,6,7,8-tetrahydrofolate + L-glutamate = N-formyl-L-glutamate + (6S)-5,6,7,8-tetrahydrofolate + H(+). The catalysed reaction is 5-formimidoyltetrahydrofolate + L-glutamate = N-formimidoyl-L-glutamate + (6S)-5,6,7,8-tetrahydrofolate. Its pathway is one-carbon metabolism; tetrahydrofolate interconversion. Its function is as follows. Involved in the regulation of root growth. May regulate sorting and/or transportation of trans-Golgi network (TGN) vesicles in root cap peripheral cells, thus influencing the extracellular secretion of mucilage components in the root cap. The sequence is that of Formiminotransferase cyclodeaminase-like protein from Arabidopsis thaliana (Mouse-ear cress).